The primary structure comprises 339 residues: Fe-S cluster assembly protein DRE2 (339 aa).

The N-terminal SAM-like domain stretch occupies residues 1-157 (MTRILLLLHP…KKLSSTHAAV (157 aa)). Residues 158–206 (GLTDTSASNTDEENDDVNSKRKLQETKLAYFSESDDEDEEDQIIDENNL) form a linker region. Residues C221, C233, C236, and C238 each coordinate [2Fe-2S] cluster. The segment at 221–238 (CELPNGKKRRKACKDCTC) is fe-S binding site A. Residues C302, C305, C313, and C316 each coordinate [4Fe-4S] cluster. Short sequence motifs (cx2C motif) lie at residues 302–305 (CSSC) and 313–316 (CDGC). The tract at residues 302 to 316 (CSSCSLGDAFRCDGC) is fe-S binding site B.

The protein belongs to the anamorsin family. Monomer. Interacts with TAH18. Interacts with MIA40. [2Fe-2S] cluster is required as a cofactor. The cofactor is [4Fe-4S] cluster.

It localises to the cytoplasm. The protein resides in the mitochondrion intermembrane space. Its function is as follows. Component of the cytosolic iron-sulfur (Fe-S) protein assembly (CIA) machinery required for the maturation of extramitochondrial Fe-S proteins. Part of an electron transfer chain functioning in an early step of cytosolic Fe-S biogenesis, facilitating the de novo assembly of a [4Fe-4S] cluster on the scaffold complex CFD1-NBP35. Electrons are transferred to DRE2 from NADPH via the FAD- and FMN-containing protein TAH18. TAH18-DRE2 are also required for the assembly of the diferric tyrosyl radical cofactor of ribonucleotide reductase (RNR), probably by providing electrons for reduction during radical cofactor maturation in the catalytic small subunit RNR2. The sequence is that of Fe-S cluster assembly protein DRE2 from Debaryomyces hansenii (strain ATCC 36239 / CBS 767 / BCRC 21394 / JCM 1990 / NBRC 0083 / IGC 2968) (Yeast).